We begin with the raw amino-acid sequence, 131 residues long: MSVTDPIADMLTRIRNAQQVNKAKVRMPASKLKRAIARVLVEEGYIQEVKEDVANGHPVLDLTLKYYAGAGVIAEIRRVSRPGVRVYRGAEDLPRVRDGFGIAIISTSQGIMTDRAARSAGIGGEVLCVVS.

This sequence belongs to the universal ribosomal protein uS8 family. In terms of assembly, part of the 30S ribosomal subunit. Contacts proteins S5 and S12.

One of the primary rRNA binding proteins, it binds directly to 16S rRNA central domain where it helps coordinate assembly of the platform of the 30S subunit. The sequence is that of Small ribosomal subunit protein uS8 from Acidithiobacillus ferrooxidans (strain ATCC 23270 / DSM 14882 / CIP 104768 / NCIMB 8455) (Ferrobacillus ferrooxidans (strain ATCC 23270)).